The following is a 248-amino-acid chain: Flavodoxin/ferredoxin--NADP reductase (248 aa).

Residues 2 to 101 (ADWVTGKVTK…SEAAGFFVLD (100 aa)) enclose the FAD-binding FR-type domain. Asp17 is an NADP(+) binding site. Residues 50 to 53 (RAYS), Tyr66, 74 to 76 (KLS), and Thr116 each bind FAD. Residues 143 to 144 (AR), 173 to 174 (SR), Arg184, 214 to 216 (NPQ), and Asp220 each bind NADP(+). Position 247 to 248 (247 to 248 (YW)) interacts with FAD.

This sequence belongs to the ferredoxin--NADP reductase type 1 family. As to quaternary structure, monomer. It depends on FAD as a cofactor.

It localises to the cytoplasm. It catalyses the reaction 2 reduced [2Fe-2S]-[ferredoxin] + NADP(+) + H(+) = 2 oxidized [2Fe-2S]-[ferredoxin] + NADPH. The enzyme catalyses reduced [flavodoxin] + NADP(+) = oxidized [flavodoxin] + NADPH + 2 H(+). Functionally, transports electrons between flavodoxin or ferredoxin and NADPH. Reduces flavodoxin 1, flavodoxin 2 and ferredoxin, ferredoxin being the kinetically and thermodynamically preferred partner. Required for the activation of several enzymes such as pyruvate formate-lyase, anaerobic ribonucleotide reductase and cobalamin-dependent methionine synthase. This is Flavodoxin/ferredoxin--NADP reductase from Escherichia coli (strain K12).